The sequence spans 210 residues: Dephospho-CoA kinase (210 aa).

The region spanning 4-201 (IVALTGGICS…NFYIYLSKQN (198 aa)) is the DPCK domain. 12-17 (CSGKTT) serves as a coordination point for ATP.

The protein belongs to the CoaE family.

It is found in the cytoplasm. The catalysed reaction is 3'-dephospho-CoA + ATP = ADP + CoA + H(+). Its pathway is cofactor biosynthesis; coenzyme A biosynthesis; CoA from (R)-pantothenate: step 5/5. Catalyzes the phosphorylation of the 3'-hydroxyl group of dephosphocoenzyme A to form coenzyme A. The polypeptide is Dephospho-CoA kinase (Buchnera aphidicola subsp. Schizaphis graminum (strain Sg)).